A 427-amino-acid chain; its full sequence is A-adding tRNA nucleotidyltransferase (427 aa).

ATP is bound at residue 49 to 52 (GTVR). Positions 62 and 64 each coordinate Mg(2+). Residues 136–137 (RD), asparagine 141, 181–190 (DPTRLLRGVR), arginine 194, and arginine 225 each bind ATP.

The protein belongs to the tRNA nucleotidyltransferase/poly(A) polymerase family. Requires Mg(2+) as cofactor.

The catalysed reaction is a tRNA with a 3' CC end + ATP = a tRNA with a 3' CCA end + diphosphate. Functionally, tRNA nucleotidyltransferase involved in the synthesis of the tRNA CCA terminus. Adds the terminal adenosine residue to tRNA. The protein is A-adding tRNA nucleotidyltransferase of Halalkalibacterium halodurans (strain ATCC BAA-125 / DSM 18197 / FERM 7344 / JCM 9153 / C-125) (Bacillus halodurans).